Reading from the N-terminus, the 187-residue chain is U8 snoRNA-decapping enzyme (187 aa).

One can recognise a Nudix hydrolase domain in the interval 43 to 187; sequence NSSQASHCMI…GFPTFLTTPS (145 aa). Phenylalanine 82 provides a ligand contact to substrate. Residues glycine 84, glutamate 100, glutamate 104, and glutamate 160 each coordinate Mn(2+). Residues 85-106 carry the Nudix box motif; it reads GLVDAGEDSIKALNRELTEEMN.

This sequence belongs to the Nudix hydrolase family. NUDT16 subfamily. As to quaternary structure, homodimer. It depends on Mg(2+) as a cofactor. Requires Mn(2+) as cofactor. Co(2+) is required as a cofactor.

The protein localises to the nucleus. It is found in the nucleolus. Its subcellular location is the nucleoplasm. It localises to the cytoplasm. It carries out the reaction a 5'-end (N(7)-methyl 5'-triphosphoguanosine)-ribonucleoside in mRNA + H2O = N(7)-methyl-GDP + a 5'-end phospho-ribonucleoside in mRNA + 2 H(+). It catalyses the reaction IDP + H2O = IMP + phosphate + H(+). The enzyme catalyses dIDP + H2O = dIMP + phosphate + H(+). Functionally, RNA-binding and decapping enzyme that catalyzes the cleavage of the cap structure of snoRNAs in a metal-dependent manner. Has diphosphatase activity and removes m7G caps from U8 snoRNA. May catalyze the cleavage of the cap structure on mRNAs. May also act as a phosphatase; hydrolyzes the non-canonical purine nucleotides inosine diphosphate (IDP) and deoxyinosine diphosphate (dITP). May bind to the U8 snoRNA. In Homalodisca vitripennis (Glassy-winged sharpshooter), this protein is U8 snoRNA-decapping enzyme (NUDT16).